We begin with the raw amino-acid sequence, 501 residues long: Glucans biosynthesis protein G (501 aa).

The signal sequence occupies residues M1–A24.

Belongs to the OpgD/OpgG family.

The protein localises to the periplasm. The protein operates within glycan metabolism; osmoregulated periplasmic glucan (OPG) biosynthesis. Involved in the biosynthesis of osmoregulated periplasmic glucans (OPGs). In Rhodopseudomonas palustris (strain BisA53), this protein is Glucans biosynthesis protein G.